Consider the following 284-residue polypeptide: tRNA-cytidine(32) 2-sulfurtransferase (284 aa).

Residues 44–49 (SGGKDS) carry the PP-loop motif motif. [4Fe-4S] cluster-binding residues include Cys-119, Cys-122, and Cys-210.

Belongs to the TtcA family. Homodimer. It depends on Mg(2+) as a cofactor. Requires [4Fe-4S] cluster as cofactor.

It is found in the cytoplasm. The enzyme catalyses cytidine(32) in tRNA + S-sulfanyl-L-cysteinyl-[cysteine desulfurase] + AH2 + ATP = 2-thiocytidine(32) in tRNA + L-cysteinyl-[cysteine desulfurase] + A + AMP + diphosphate + H(+). Its pathway is tRNA modification. Functionally, catalyzes the ATP-dependent 2-thiolation of cytidine in position 32 of tRNA, to form 2-thiocytidine (s(2)C32). The sulfur atoms are provided by the cysteine/cysteine desulfurase (IscS) system. This is tRNA-cytidine(32) 2-sulfurtransferase from Chromohalobacter salexigens (strain ATCC BAA-138 / DSM 3043 / CIP 106854 / NCIMB 13768 / 1H11).